Here is a 130-residue protein sequence, read N- to C-terminus: Ribosome-binding factor A (130 aa).

This sequence belongs to the RbfA family. In terms of assembly, monomer. Binds 30S ribosomal subunits, but not 50S ribosomal subunits or 70S ribosomes.

Its subcellular location is the cytoplasm. Functionally, one of several proteins that assist in the late maturation steps of the functional core of the 30S ribosomal subunit. Associates with free 30S ribosomal subunits (but not with 30S subunits that are part of 70S ribosomes or polysomes). Required for efficient processing of 16S rRNA. May interact with the 5'-terminal helix region of 16S rRNA. This Pseudomonas aeruginosa (strain LESB58) protein is Ribosome-binding factor A.